Here is a 371-residue protein sequence, read N- to C-terminus: Beta sliding clamp (371 aa).

The protein belongs to the beta sliding clamp family. Forms a ring-shaped head-to-tail homodimer around DNA which binds and tethers DNA polymerases and other proteins to the DNA. The DNA replisome complex has a single clamp-loading complex (3 tau and 1 each of delta, delta', psi and chi subunits) which binds 3 Pol III cores (1 core on the leading strand and 2 on the lagging strand) each with a beta sliding clamp dimer. Additional proteins in the replisome are other copies of gamma, psi and chi, Ssb, DNA helicase and RNA primase.

It is found in the cytoplasm. Confers DNA tethering and processivity to DNA polymerases and other proteins. Acts as a clamp, forming a ring around DNA (a reaction catalyzed by the clamp-loading complex) which diffuses in an ATP-independent manner freely and bidirectionally along dsDNA. Initially characterized for its ability to contact the catalytic subunit of DNA polymerase III (Pol III), a complex, multichain enzyme responsible for most of the replicative synthesis in bacteria; Pol III exhibits 3'-5' exonuclease proofreading activity. The beta chain is required for initiation of replication as well as for processivity of DNA replication. The protein is Beta sliding clamp (dnaN) of Treponema pallidum (strain Nichols).